Here is a 101-residue protein sequence, read N- to C-terminus: Biogenesis of lysosome-related organelles complex 1 subunit SNN1 (101 aa).

Positions 62 to 100 form a coiled coil; sequence DSNEYKAQFKEVNNLQKRLQKITLRLKDLERRSSQLTTS.

The protein belongs to the SNAPIN family. In terms of assembly, component of the biogenesis of lysosome-related organelles complex-1 (BLOC-1).

It is found in the endosome. In terms of biological role, component of the biogenesis of lysosome-related organelles complex-1 (BLOC-1), a complex involved in endosomal cargo sorting. In Candida glabrata (strain ATCC 2001 / BCRC 20586 / JCM 3761 / NBRC 0622 / NRRL Y-65 / CBS 138) (Yeast), this protein is Biogenesis of lysosome-related organelles complex 1 subunit SNN1 (SNN1).